We begin with the raw amino-acid sequence, 23 residues long: U22-ctenitoxin-Co1a (23 aa).

In terms of tissue distribution, expressed by the venom gland.

It localises to the secreted. The polypeptide is U22-ctenitoxin-Co1a (Ctenus ornatus (Brazilian spider)).